The primary structure comprises 478 residues: Cytochrome P450 family 716 subfamily AD polypeptide 4 (478 aa).

Residues 1 to 21 (MELFLPSVLLILTVFCFYYLF) traverse the membrane as a helical segment. Residue Cys425 participates in heme binding.

This sequence belongs to the cytochrome P450 family. It depends on heme as a cofactor. As to expression, mainly expressed in petioles and, to a lower extent, in roots.

It localises to the membrane. The catalysed reaction is (1S,3bR,4R,5aR,9aR,9bR,11aS)-1-[(4R)-5-[(2S)-3,3-dimethyloxiran-2-yl]-1,4-dihydroxybutan-2-yl]-3b,6,6,9a,11a-pentamethyl-7-oxo-1H,2H,3bH,4H,5H,5aH,6H,7H,9aH,9bH,10H,11H,11aH-cyclopenta[a]phenanthren-4-yl acetate + reduced [NADPH--hemoprotein reductase] + O2 = (1S,3bR,4R,5aR,9aR,9bR,11aS)-1-(1-hydroxy-4-oxobutan-2-yl)-3b,6,6,9a,11a-pentamethyl-7-oxo-1H,2H,3bH,4H,5H,5aH,6H,7H,9aH,9bH,10H,11H,11aH-cyclopenta[a]phenanthren-4-yl acetate + 2-methylpropanoate + oxidized [NADPH--hemoprotein reductase] + H2O + 2 H(+). Its pathway is secondary metabolite biosynthesis; terpenoid biosynthesis. Functionally, monooxygenase involved in the biosynthesis of limonoids triterpene natural products such as azadirachtin, an antifeedant widely used as bioinsecticide, and possessing many medicinal applications including anti-tumoral, anti-malarial, anti-rheumatic, antibacterial, anti-inflammatory, anti-pyretic and diuretic effects. Catalyzes the formation of (1S,3bR,4R,5aR,9aR,9bR,11aS)-1-(1-hydroxy-4-oxobutan-2-yl)-3b,6,6,9a,11a-pentamethyl-7-oxo-1H,2H,3bH,4H,5H,5aH,6H,7H,9aH,9bH,10H,11H,11aH-cyclopenta[a]phenanthren-4-yl acetate. This Melia azedarach (Chinaberry tree) protein is Cytochrome P450 family 716 subfamily AD polypeptide 4.